The sequence spans 402 residues: Protein PMR5 (402 aa).

The chain crosses the membrane as a helical; Signal-anchor for type II membrane protein span at residues 7–23 (LLGISVVSAIFFLVLQQ). Residues 40-60 (GSSSGSSGNQYSSSRPSAGFQ) are disordered. Positions 41–56 (SSSGSSGNQYSSSRPS) are enriched in low complexity. The short motif at 140–142 (GDS) is the GDS motif element. The short motif at 379 to 393 (DCSHWCLPGLPDTWN) is the DCXHWCLPGXXDXWN motif element.

This sequence belongs to the PC-esterase family. TBL subfamily. As to expression, expressed in flowers, siliques, stems and leaves.

The protein localises to the membrane. Functionally, required for nonhost resistance (NHR) during plant-microbe interactions. Plants mutated in PMR5 are resistant to powdery mildew species. May act as a bridging protein that binds pectin and other cell wall polysaccharides. Probably involved in maintaining esterification of pectins. May be involved in the specific O-acetylation of cell wall polymers. The chain is Protein PMR5 (PMR5) from Arabidopsis thaliana (Mouse-ear cress).